The following is a 360-amino-acid chain: C-C chemokine receptor type 2 (360 aa).

Residues 1-42 are Extracellular-facing; that stretch reads MLSTSRSRFIRNTNGSGEEVTTFFDYDYGAPCHKFDVKQIGA. Asn14 is a glycosylation site (N-linked (GlcNAc...) asparagine). Tyr26 is subject to Sulfotyrosine. The chain crosses the membrane as a helical span at residues 43–70; that stretch reads QLLPPLYSLVFIFGFVGNMLVVLILINC. At 71-80 the chain is on the cytoplasmic side; sequence KKLKSLTDIY. A helical transmembrane segment spans residues 81-100; that stretch reads LLNLAISDLLFLITLPLWAH. Residues 101 to 114 lie on the Extracellular side of the membrane; it reads SAANEWVFGNAMCK. Residues Cys113 and Cys190 are joined by a disulfide bond. Residues 115-136 form a helical membrane-spanning segment; that stretch reads LFTGLYHIGYLGGIFFIILLTI. Residues 137–153 are Cytoplasmic-facing; it reads DRYLAIVHAVFALKART. The residue at position 139 (Tyr139) is a Phosphotyrosine; by JAK2. A helical membrane pass occupies residues 154-178; sequence VTFGVVTSVITWLVAVFASVPGIIF. The Extracellular portion of the chain corresponds to 179 to 206; sequence TKCQEEDSVYICGPYFPRGWNNFHTIMR. A helical transmembrane segment spans residues 207–226; it reads NILGLVLPLLIMVICYSGIL. The Cytoplasmic segment spans residues 227–243; the sequence is KTLLRCRNEKKRHRAVR. The helical transmembrane segment at 244–268 threads the bilayer; the sequence is LIFTIMIVYFLFWTPYNIVILLNTF. Over 269-285 the chain is Extracellular; the sequence is QEFFGLSNCESTRQLDQ. A helical transmembrane segment spans residues 286–309; it reads ATQVTETLGMTHCCINPIIYAFVG. Over 310 to 360 the chain is Cytoplasmic; that stretch reads EKFRRYLSMFFRKYITKRFCKQCPVFYRETVDGVTSTNTPSTAEQEVSVGL.

This sequence belongs to the G-protein coupled receptor 1 family. In terms of assembly, interacts with ARRB1. Interacts (via extracellular N-terminal region) with beta-defensin DEFB106A/DEFB106B; this interaction may preferentially require specific tyrosine sulfation on CCR2. Interacts with NUP85; the interaction is required for CCR2 clusters formation on the cell membrane and CCR2 signaling. Post-translationally, N-glycosylated. Sulfation increases the affinity for both monomeric and dimeric CCL2 with stronger binding to the monomeric form. Binding of sulfated CCR2 to CCL2 promotes conversion of CCL2 from dimer to monomer.

The protein localises to the cell membrane. Its function is as follows. Key functional receptor for CCL2 but can also bind CCL7 and CCL12. Its binding with CCL2 on monocytes and macrophages mediates chemotaxis and migration induction through the activation of the PI3K cascade, the small G protein Rac and lamellipodium protrusion. Also acts as a receptor for the beta-defensin DEFB106A/DEFB106B. Regulates the expression of T-cell inflammatory cytokines and T-cell differentiation, promoting the differentiation of T-cells into T-helper 17 cells (Th17) during inflammation. Facilitates the export of mature thymocytes by enhancing directional movement of thymocytes to sphingosine-1-phosphate stimulation and up-regulation of S1P1R expression; signals through the JAK-STAT pathway to regulate FOXO1 activity leading to an increased expression of S1P1R. Plays an important role in mediating peripheral nerve injury-induced neuropathic pain. Increases NMDA-mediated synaptic transmission in both dopamine D1 and D2 receptor-containing neurons, which may be caused by MAPK/ERK-dependent phosphorylation of GRIN2B/NMDAR2B. Mediates the recruitment of macrophages and monocytes to the injury site following brain injury. The sequence is that of C-C chemokine receptor type 2 (CCR2) from Macaca mulatta (Rhesus macaque).